A 559-amino-acid polypeptide reads, in one-letter code: Glucose-6-phosphate isomerase (559 aa).

Residue Glu352 is the Proton donor of the active site. Catalysis depends on residues His383 and Lys511.

This sequence belongs to the GPI family.

The protein resides in the cytoplasm. It catalyses the reaction alpha-D-glucose 6-phosphate = beta-D-fructose 6-phosphate. The protein operates within carbohydrate biosynthesis; gluconeogenesis. Its pathway is carbohydrate degradation; glycolysis; D-glyceraldehyde 3-phosphate and glycerone phosphate from D-glucose: step 2/4. Functionally, catalyzes the reversible isomerization of glucose-6-phosphate to fructose-6-phosphate. The protein is Glucose-6-phosphate isomerase of Chlorobaculum tepidum (strain ATCC 49652 / DSM 12025 / NBRC 103806 / TLS) (Chlorobium tepidum).